We begin with the raw amino-acid sequence, 929 residues long: Chitin synthase 1 (929 aa).

Positions 1–12 (MAYRGAGGPGGG) are enriched in gly residues. Disordered regions lie at residues 1–43 (MAYR…QEDE) and 114–156 (MGGH…GGGL). 2 stretches are compositionally biased toward polar residues: residues 21–33 (QDLN…SNVQ) and 140–149 (SWVQRQNPNA). Asn560 is a glycosylation site (N-linked (GlcNAc...) asparagine). 5 helical membrane passes run 587–607 (FFFH…WFSL), 643–663 (LFNA…FILA), 678–698 (SFFV…YLVV), 730–750 (VILL…FMYL), and 758–778 (SFPY…VYAF). Asn801 carries an N-linked (GlcNAc...) asparagine glycan. Transmembrane regions (helical) follow at residues 857 to 877 (TMLV…ITSD) and 897 to 917 (FLLF…LWFL).

The protein belongs to the chitin synthase family. Class III subfamily.

It localises to the cell membrane. It catalyses the reaction [(1-&gt;4)-N-acetyl-beta-D-glucosaminyl](n) + UDP-N-acetyl-alpha-D-glucosamine = [(1-&gt;4)-N-acetyl-beta-D-glucosaminyl](n+1) + UDP + H(+). Its function is as follows. Polymerizes chitin, a structural polymer of the cell wall and septum, by transferring the sugar moiety of UDP-GlcNAc to the non-reducing end of the growing chitin polymer. CHS1 and CHS3 have compensatory functions in cell wall modifications in responses to stresses. Involved in appressoria formation and required for full virulence. The polypeptide is Chitin synthase 1 (Pyricularia oryzae (strain 70-15 / ATCC MYA-4617 / FGSC 8958) (Rice blast fungus)).